A 236-amino-acid chain; its full sequence is MVKVLLALTSYNETFYSDGKKTGVFVVEALHPFEVFRKKGYEIQLASETGTFGWDDHSVVPDFLNGEDKEIFDNVNSEFNVALKNLKKASDLDPNDYDIFFGSAGHGTLFDYPNAKDLQKIATTVYDKGGVVSAVCHGPAIFENLNDPKTGEPLIKGKKITGFTDIGEDILGVTDIMKKGNLLTIKQVAEKEGATYIEPEGPWDNFTVTDGRIVTGVNPQSAVKTAEDVIAAFECN.

Residues C136, H137, and E168 contribute to the active site. Position 136 is a cysteine sulfinic acid (-SO2H) (C136).

It belongs to the peptidase C56 family. HSP31-like subfamily. Monomer.

It carries out the reaction methylglyoxal + H2O = (R)-lactate + H(+). Its function is as follows. Catalyzes the conversion of methylglyoxal (MG) to D-lactate in a single glutathione (GSH)-independent step. Selective for MG, does not use glyoxal as substrate. Plays a role in detoxifying endogenously produced MG, particularly when glycerol is the principal carbon source. Important for viability in stationary phase. This is Glyoxalase 3 from Candida albicans (strain SC5314 / ATCC MYA-2876) (Yeast).